Reading from the N-terminus, the 161-residue chain is Nucleotide-binding protein BamMC406_2474 (161 aa).

The protein belongs to the YajQ family.

Functionally, nucleotide-binding protein. This chain is Nucleotide-binding protein BamMC406_2474, found in Burkholderia ambifaria (strain MC40-6).